Reading from the N-terminus, the 48-residue chain is Delta-ctenitoxin-Pn1b (48 aa).

Intrachain disulfides connect cysteine 1-cysteine 15, cysteine 8-cysteine 21, cysteine 12-cysteine 48, cysteine 14-cysteine 31, and cysteine 23-cysteine 29.

Belongs to the neurotoxin 03 (Tx2) family. 05 subfamily. As to expression, expressed by the venom gland.

It localises to the secreted. Its function is as follows. Insecticidal neurotoxin that reversibly inhibits the N-methyl-D-aspartate (NMDA)-subtype of ionotropic glutamate receptor (GRIN) and inhibits inactivation of insect sodium channels (Nav). Inhibits glutamate uptake in rat brain synaptosomes. In vivo, induces immediate excitatory effects when injected intrathoracically in houseflies and cockroaches. The protein is Delta-ctenitoxin-Pn1b of Phoneutria nigriventer (Brazilian armed spider).